The following is a 123-amino-acid chain: Ragulator complex protein LAMTOR3-B (123 aa).

The protein belongs to the LAMTOR3 family. In terms of assembly, part of the Ragulator complex composed of lamtor1, lamtor2, lamtor3, lamtor4 and lamtor5. The Ragulator complex interacts with slc38a9; the probable amino acid sensor. Component of the lysosomal folliculin complex (LFC).

Its subcellular location is the late endosome membrane. In terms of biological role, as part of the Ragulator complex it is involved in amino acid sensing and activation of mTORC1, a signaling complex promoting cell growth in response to growth factors, energy levels, and amino acids. Activated by amino acids through a mechanism involving the lysosomal V-ATPase, the Ragulator plays a dual role for the small GTPases Rag (RagA/RRAGA, RagB/RRAGB, RagC/RRAGC and/or RagD/RRAGD): it (1) acts as a guanine nucleotide exchange factor (GEF), activating the small GTPases Rag and (2) mediates recruitment of Rag GTPases to the lysosome membrane. Activated Ragulator and Rag GTPases function as a scaffold recruiting mTORC1 to lysosomes where it is in turn activated. This Xenopus laevis (African clawed frog) protein is Ragulator complex protein LAMTOR3-B (lamtor3-b).